A 342-amino-acid chain; its full sequence is Ferredoxin--NADP reductase (342 aa).

C17, D36, Q44, Y49, I89, F124, D289, and T330 together coordinate FAD.

Belongs to the ferredoxin--NADP reductase type 2 family. Homodimer. FAD serves as cofactor.

It carries out the reaction 2 reduced [2Fe-2S]-[ferredoxin] + NADP(+) + H(+) = 2 oxidized [2Fe-2S]-[ferredoxin] + NADPH. This chain is Ferredoxin--NADP reductase, found in Rhodopseudomonas palustris (strain BisB5).